The sequence spans 1070 residues: DNA-directed RNA polymerase subunit beta (1070 aa).

This sequence belongs to the RNA polymerase beta chain family. In plastids the minimal PEP RNA polymerase catalytic core is composed of four subunits: alpha, beta, beta', and beta''. When a (nuclear-encoded) sigma factor is associated with the core the holoenzyme is formed, which can initiate transcription.

Its subcellular location is the plastid. The protein localises to the chloroplast. It catalyses the reaction RNA(n) + a ribonucleoside 5'-triphosphate = RNA(n+1) + diphosphate. Its function is as follows. DNA-dependent RNA polymerase catalyzes the transcription of DNA into RNA using the four ribonucleoside triphosphates as substrates. This chain is DNA-directed RNA polymerase subunit beta, found in Angiopteris evecta (Mule's foot fern).